The chain runs to 233 residues: Ribose-5-phosphate isomerase A (233 aa).

Residues 31–34 (SGST), 87–90 (DGAD), and 100–103 (KGGG) contribute to the substrate site. The Proton acceptor role is filled by Glu-109. Lys-127 contacts substrate.

It belongs to the ribose 5-phosphate isomerase family. In terms of assembly, homodimer.

The enzyme catalyses aldehydo-D-ribose 5-phosphate = D-ribulose 5-phosphate. Its pathway is carbohydrate degradation; pentose phosphate pathway; D-ribose 5-phosphate from D-ribulose 5-phosphate (non-oxidative stage): step 1/1. Its function is as follows. Catalyzes the reversible conversion of ribose-5-phosphate to ribulose 5-phosphate. This Chlamydia caviae (strain ATCC VR-813 / DSM 19441 / 03DC25 / GPIC) (Chlamydophila caviae) protein is Ribose-5-phosphate isomerase A.